Here is a 445-residue protein sequence, read N- to C-terminus: Cyclic GMP-AMP phosphodiesterase SMPDL3A (445 aa).

An N-terminal signal peptide occupies residues Met-1–Gly-22. Zn(2+) is bound by residues Asp-42 and His-44. Cys-59 and Cys-78 form a disulfide bridge. Asn-66 is a glycosylation site (N-linked (GlcNAc...) asparagine). Residue Asp-107 participates in Zn(2+) binding. His-111 is an ATP binding site. N-linked (GlcNAc...) asparagine glycosylation occurs at Asn-128. Asn-148 contacts Zn(2+). Asn-148 and His-149 together coordinate ATP. N-linked (GlcNAc...) asparagine glycosylation is found at Asn-219 and Asn-235. His-249, His-290, and His-292 together coordinate Zn(2+). Residues Asn-353 and Asn-364 are each glycosylated (N-linked (GlcNAc...) asparagine). Intrachain disulfides connect Cys-417-Cys-421 and Cys-427-Cys-440.

Belongs to the acid sphingomyelinase family. Monomer. Homodimer; homodimerizes following 2',3'-cGAMP-binding. Zn(2+) is required as a cofactor.

The protein localises to the secreted. The enzyme catalyses 2',3'-cGAMP + H2O = 5'-pGpA(2'-5') + H(+). The catalysed reaction is 5'-pGpA(2'-5') + H2O = 5'-GpA(2'-5') + phosphate. It catalyses the reaction a ribonucleoside 5'-triphosphate + H2O = a ribonucleoside 5'-diphosphate + phosphate + H(+). It carries out the reaction ATP + H2O = ADP + phosphate + H(+). Cyclic-nucleotide phosphodiesterase that acts as a negative regulator of innate immunity by mediating degradation of 2',3'-cGAMP, thereby inhibiting the cGAS-STING signaling. Specifically linearizes 2',3'-cGAMP into 2'5'-bond pGpA and further hydrolyzes pGpA to produce GpA. Also has in vitro nucleotide phosphodiesterase activity with nucleoside triphosphates, such as ATP. Has in vitro activity with p-nitrophenyl-TMP. Has lower activity with nucleoside diphosphates, and no activity with nucleoside monophosphates. Has in vitro activity with CDP-choline, giving rise to CMP and phosphocholine. Has in vitro activity with CDP-ethanolamine. Does not have sphingomyelin phosphodiesterase activity. This chain is Cyclic GMP-AMP phosphodiesterase SMPDL3A (Smpdl3a), found in Rattus norvegicus (Rat).